The primary structure comprises 361 residues: UDP-N-acetylglucosamine--N-acetylmuramyl-(pentapeptide) pyrophosphoryl-undecaprenol N-acetylglucosamine transferase (361 aa).

UDP-N-acetyl-alpha-D-glucosamine-binding positions include 13 to 15, asparagine 125, arginine 167, serine 196, isoleucine 251, 270 to 275, and glutamine 296; these read TGG and ALTVTE.

The protein belongs to the glycosyltransferase 28 family. MurG subfamily.

The protein resides in the cell inner membrane. The catalysed reaction is di-trans,octa-cis-undecaprenyl diphospho-N-acetyl-alpha-D-muramoyl-L-alanyl-D-glutamyl-meso-2,6-diaminopimeloyl-D-alanyl-D-alanine + UDP-N-acetyl-alpha-D-glucosamine = di-trans,octa-cis-undecaprenyl diphospho-[N-acetyl-alpha-D-glucosaminyl-(1-&gt;4)]-N-acetyl-alpha-D-muramoyl-L-alanyl-D-glutamyl-meso-2,6-diaminopimeloyl-D-alanyl-D-alanine + UDP + H(+). Its pathway is cell wall biogenesis; peptidoglycan biosynthesis. Functionally, cell wall formation. Catalyzes the transfer of a GlcNAc subunit on undecaprenyl-pyrophosphoryl-MurNAc-pentapeptide (lipid intermediate I) to form undecaprenyl-pyrophosphoryl-MurNAc-(pentapeptide)GlcNAc (lipid intermediate II). This chain is UDP-N-acetylglucosamine--N-acetylmuramyl-(pentapeptide) pyrophosphoryl-undecaprenol N-acetylglucosamine transferase, found in Psychrobacter arcticus (strain DSM 17307 / VKM B-2377 / 273-4).